The chain runs to 310 residues: MGFQVLRSVIQAPLAKRSFLCKSCPSGLRVLYNNILLSSRSYSTKGSAFTLIKKLRQETNAPIFLIKEAVEETNGQSFFEAKSVLSEKMKARGQRLAQQLQGRVAKQGWICTAILPDAQAACMLELNCESDFVAQNPKIQRLALSSASSILHSLNRVNADSTEQRNVSTDLDSLKKIILHSDKDSSSNLGNTLFDAFSNATSTTGERIELSRAIVFQRTKPQHQLGRYTHGTDVRVHSSLGRVGCLVSLSNAQKAGLADDIAREFVAQDPESIDDFLHNTSVYDNSKTMKDLLGSANVVDWVRWERGQAQ.

Residues 1-42 constitute a mitochondrion transit peptide; the sequence is MGFQVLRSVIQAPLAKRSFLCKSCPSGLRVLYNNILLSSRSY.

This sequence belongs to the EF-Ts family.

The protein localises to the mitochondrion. Associates with the EF-Tu.GDP complex and induces the exchange of GDP to GTP. It remains bound to the aminoacyl-tRNA.EF-Tu.GTP complex up to the GTP hydrolysis stage on the ribosome. The protein is Elongation factor Ts, mitochondrial (tsf1) of Schizosaccharomyces japonicus (strain yFS275 / FY16936) (Fission yeast).